Consider the following 908-residue polypeptide: DNA mismatch repair protein MutS (908 aa).

Position 662 to 669 (662 to 669) interacts with ATP; that stretch reads GPNMGGKS.

Belongs to the DNA mismatch repair MutS family.

This protein is involved in the repair of mismatches in DNA. It is possible that it carries out the mismatch recognition step. This protein has a weak ATPase activity. In Rhizobium etli (strain ATCC 51251 / DSM 11541 / JCM 21823 / NBRC 15573 / CFN 42), this protein is DNA mismatch repair protein MutS.